Here is a 450-residue protein sequence, read N- to C-terminus: NADH-ubiquinone oxidoreductase chain 2 (450 aa).

13 helical membrane-spanning segments follow: residues 25–45 (GTIT…IVAM), 58–78 (LTPY…MLLM), 90–110 (SPFY…FPLV), 113–133 (LIAL…LTGL), 145–165 (LLYF…SYFV), 186–206 (AFDY…MAPL), 219–239 (TYIT…WIFA), 248–268 (VTIL…LFQV), 272–292 (TMLA…MMSY), 295–315 (AFYI…LGML), 344–364 (LAFS…TPGF), 385–405 (AIVV…KVLF), and 414–436 (NFIN…SFFM).

Belongs to the complex I subunit 2 family.

It is found in the mitochondrion inner membrane. The enzyme catalyses a ubiquinone + NADH + 5 H(+)(in) = a ubiquinol + NAD(+) + 4 H(+)(out). In terms of biological role, core subunit of the mitochondrial membrane respiratory chain NADH dehydrogenase (Complex I) that is believed to belong to the minimal assembly required for catalysis. Complex I functions in the transfer of electrons from NADH to the respiratory chain. The immediate electron acceptor for the enzyme is believed to be ubiquinone. This chain is NADH-ubiquinone oxidoreductase chain 2 (ND2), found in Debaryomyces hansenii (strain ATCC 36239 / CBS 767 / BCRC 21394 / JCM 1990 / NBRC 0083 / IGC 2968) (Yeast).